The sequence spans 632 residues: Effector protein hopAD1 (632 aa).

Residues 13 to 34 (TAVDSSLPTSATSQTISNTKSR) form a disordered region. The span at 15–32 (VDSSLPTSATSQTISNTK) shows a compositional bias: polar residues.

The protein localises to the secreted. The polypeptide is Effector protein hopAD1 (hopAD1) (Pseudomonas syringae pv. tomato (strain ATCC BAA-871 / DC3000)).